The primary structure comprises 908 residues: Protein translocase subunit SecA (908 aa).

ATP-binding positions include Gln90, 108-112 (GEGKT), and Asp503. Residues 846 to 864 (AAAAEAPVAPAPQPAAAAP) show a composition bias toward low complexity. Residues 846 to 884 (AAAAEAPVAPAPQPAAAAPQPTPELVGAEAGEPDPAAWG) form a disordered region. Zn(2+)-binding residues include Cys892, Cys894, Cys903, and His904.

Belongs to the SecA family. In terms of assembly, monomer and homodimer. Part of the essential Sec protein translocation apparatus which comprises SecA, SecYEG and auxiliary proteins SecDF-YajC and YidC. The cofactor is Zn(2+).

The protein localises to the cell inner membrane. It localises to the cytoplasm. The enzyme catalyses ATP + H2O + cellular proteinSide 1 = ADP + phosphate + cellular proteinSide 2.. Part of the Sec protein translocase complex. Interacts with the SecYEG preprotein conducting channel. Has a central role in coupling the hydrolysis of ATP to the transfer of proteins into and across the cell membrane, serving both as a receptor for the preprotein-SecB complex and as an ATP-driven molecular motor driving the stepwise translocation of polypeptide chains across the membrane. This chain is Protein translocase subunit SecA, found in Cereibacter sphaeroides (strain ATCC 17029 / ATH 2.4.9) (Rhodobacter sphaeroides).